Consider the following 352-residue polypeptide: Potassium/proton antiporter CemA (352 aa).

3 helical membrane-spanning segments follow: residues 52–72 (VLVS…IHFF), 227–247 (IAAL…IILF), and 312–332 (IILL…KYWI).

This sequence belongs to the CemA family.

The protein resides in the plastid. Its subcellular location is the chloroplast inner membrane. The enzyme catalyses K(+)(in) + H(+)(out) = K(+)(out) + H(+)(in). Functionally, contributes to K(+)/H(+) antiport activity by supporting proton efflux to control proton extrusion and homeostasis in chloroplasts in a light-dependent manner to modulate photosynthesis. Prevents excessive induction of non-photochemical quenching (NPQ) under continuous-light conditions. Indirectly promotes efficient inorganic carbon uptake into chloroplasts. In Oltmannsiellopsis viridis (Marine flagellate), this protein is Potassium/proton antiporter CemA.